The primary structure comprises 645 residues: Protein LHY (645 aa).

A Phosphoserine modification is found at Ser-6. An HTH myb-type domain is found at 19-73 (TITKQRERWTEDEHERFLEALRLYGRAWQRIEEHIGTKTAVQIRSHAQKFFTKLE). The segment at residues 46–69 (WQRIEEHIGTKTAVQIRSHAQKFF) is a DNA-binding region (H-T-H motif). Disordered stretches follow at residues 89–127 (IEIP…AKLV), 149–212 (EKTS…GTTV), 410–437 (QNLA…ADSK), and 458–500 (AQKK…TDEN). Over residues 110–120 (NNGTSSSQVSS) the composition is skewed to polar residues. Basic and acidic residues predominate over residues 149–158 (EKTSTGKENQ). The span at 159 to 169 (DENCSGVSTVN) shows a compositional bias: polar residues. Residues 197 to 207 (VPKKNKDKDGN) are compositionally biased toward basic and acidic residues. Over residues 468–478 (SCGSNTPSGSD) the composition is skewed to polar residues. The segment covering 483-498 (ALDKMEKDKEDVKETD) has biased composition (basic and acidic residues).

In terms of assembly, homodimer or heterodimer with CCA1. Interacts with CCA1 (via internal domain); independently of photoperiod. Functions probably as part of a large complex. Interacts with CKB1 and CKB3. Interacts with LNK1 and LNK2. In terms of processing, phosphorylated by CK2. In terms of tissue distribution, expressed in leaves, roots, stems, flowers and siliques.

It localises to the nucleus. In terms of biological role, transcription factor involved in the circadian clock. Binds to the promoter region of APRR1/TOC1 and TCP21/CHE to repress their transcription. Represses both CCA1 and itself. May recognize the promoter of JMJ14 to regulates its expression during the night in a circadian manner. This Arabidopsis thaliana (Mouse-ear cress) protein is Protein LHY.